The primary structure comprises 605 residues: Arginine--tRNA ligase (605 aa).

The short motif at 131–141 (ANPTGPMHVGH) is the 'HIGH' region element. Residues 290–309 (PPPKSKKGQPAPAQAASNSA) form a disordered region. Residues 298 to 309 (QPAPAQAASNSA) are compositionally biased toward low complexity.

Belongs to the class-I aminoacyl-tRNA synthetase family. As to quaternary structure, monomer.

It is found in the cytoplasm. It catalyses the reaction tRNA(Arg) + L-arginine + ATP = L-arginyl-tRNA(Arg) + AMP + diphosphate. This chain is Arginine--tRNA ligase, found in Anaeromyxobacter sp. (strain Fw109-5).